A 388-amino-acid polypeptide reads, in one-letter code: Pectin acetylesterase 1 (388 aa).

The signal sequence occupies residues 1-24 (MKTLLYWGWSSLAGLILFSILAHG). 2 N-linked (GlcNAc...) asparagine glycosylation sites follow: N30 and N33. Catalysis depends on charge relay system residues S187 and D283. An N-linked (GlcNAc...) asparagine glycan is attached at N304. Residue H349 is the Charge relay system of the active site.

It belongs to the pectinacetylesterase family.

Its subcellular location is the secreted. It is found in the cell wall. Hydrolyzes acetyl esters in homogalacturonan regions of pectin. In type I primary cell wall, galacturonic acid residues of pectin can be acetylated at the O-2 and O-3 positions. Decreasing the degree of acetylation of pectin gels in vitro alters their physical properties. The sequence is that of Pectin acetylesterase 1 from Arabidopsis thaliana (Mouse-ear cress).